The following is a 103-amino-acid chain: NADH-quinone oxidoreductase subunit K (103 aa).

The next 3 membrane-spanning stretches (helical) occupy residues 7–27 (TEHG…GVLV), 31–51 (LIFM…AFIV), and 65–85 (FMLI…LILL).

The protein belongs to the complex I subunit 4L family. In terms of assembly, NDH-1 is composed of 14 different subunits. Subunits NuoA, H, J, K, L, M, N constitute the membrane sector of the complex.

The protein localises to the cell inner membrane. The enzyme catalyses a quinone + NADH + 5 H(+)(in) = a quinol + NAD(+) + 4 H(+)(out). Functionally, NDH-1 shuttles electrons from NADH, via FMN and iron-sulfur (Fe-S) centers, to quinones in the respiratory chain. The immediate electron acceptor for the enzyme in this species is believed to be ubiquinone. Couples the redox reaction to proton translocation (for every two electrons transferred, four hydrogen ions are translocated across the cytoplasmic membrane), and thus conserves the redox energy in a proton gradient. The polypeptide is NADH-quinone oxidoreductase subunit K (Nitrosococcus oceani (strain ATCC 19707 / BCRC 17464 / JCM 30415 / NCIMB 11848 / C-107)).